Consider the following 377-residue polypeptide: Stimulator of interferon genes protein (377 aa).

At 1–21 (MRRAEENNGFGTIPKRRNQHT) the chain is on the cytoplasmic side. Residues 22 to 42 (PFYASIGMIVVIIVAFTSYHI) form a helical membrane-spanning segment. At 43-57 (TSYGDDRNRAMRQYS) the chain is on the extracellular side. The chain crosses the membrane as a helical span at residues 58 to 80 (FTFSLAYLAFLVGELLRRCCLFA). Residues 81–101 (EEYRHIETRYNGSLKKAIQTT) lie on the Cytoplasmic side of the membrane. Residues 102–122 (FSFGHNNVLFVASLLFFVVFV) form a helical membrane-spanning segment. The Extracellular segment spans residues 123-154 (ASNDPNGSSSVIQGNSTAEPHTEMRQTSGWQG). A helical transmembrane segment spans residues 155–175 (LWGQFIISALLTPLVVHLLGL). Residues 176–377 (RELSKVEESQ…LKDSELEIGG (202 aa)) are Cytoplasmic-facing. Residues Tyr-206, Arg-272, 278–279 (RH), and Thr-303 each bind 2',3'-cGAMP. 3',3'-c-di-GMP is bound by residues Tyr-206, Arg-272, Arg-278, and 300-303 (EYAT).

This sequence belongs to the TMEM173 family. Homodimer.

It localises to the endoplasmic reticulum membrane. Sensor of cytosolic DNA from bacteria and viruses that promotes autophagy. Acts by recognizing and binding cyclic GMP-AMP (cGAMP), a messenger produced by CGAS in response to DNA in the cytosol. Following cGAMP-binding, promotes the formation of autophagosomes, leading to target cytosolic DNA for degradation by the lysosome. Exhibits guanine base-specific ligand recognition. Binds 3'-3'linked cGAMP, 2'-3' linked cGAMP and 3'-3' linked c-di-GMP with much greater affinity as compared to 3'-3' linked c-di-AMP. Lacks the C-terminal tail (CTT) found in mammalian orthologs which is essential for interferon signaling. The protein is Stimulator of interferon genes protein of Nematostella vectensis (Starlet sea anemone).